Consider the following 95-residue polypeptide: Protein TusB (95 aa).

The protein belongs to the DsrH/TusB family. In terms of assembly, heterohexamer, formed by a dimer of trimers. The hexameric TusBCD complex contains 2 copies each of TusB, TusC and TusD. The TusBCD complex interacts with TusE.

The protein resides in the cytoplasm. Functionally, part of a sulfur-relay system required for 2-thiolation of 5-methylaminomethyl-2-thiouridine (mnm(5)s(2)U) at tRNA wobble positions. This is Protein TusB from Erwinia tasmaniensis (strain DSM 17950 / CFBP 7177 / CIP 109463 / NCPPB 4357 / Et1/99).